A 164-amino-acid polypeptide reads, in one-letter code: FMN reductase (NADH) RutF (164 aa).

It belongs to the non-flavoprotein flavin reductase family. RutF subfamily.

The enzyme catalyses FMNH2 + NAD(+) = FMN + NADH + 2 H(+). Functionally, catalyzes the reduction of FMN to FMNH2 which is used to reduce pyrimidine by RutA via the Rut pathway. The sequence is that of FMN reductase (NADH) RutF from Enterobacter cloacae subsp. cloacae (strain ATCC 13047 / DSM 30054 / NBRC 13535 / NCTC 10005 / WDCM 00083 / NCDC 279-56).